Here is a 331-residue protein sequence, read N- to C-terminus: Septin homolog spn2 (331 aa).

The region spanning 29-301 (RGFQFNVMVV…EKFRFKQLSS (273 aa)) is the Septin-type G domain. A G1 motif region spans residues 39-46 (GPSGSGKS). GTP-binding positions include 39–46 (GPSGSGKS), T73, G99, 179–187 (KSDSLTLEE), G235, and R250. The G3 motif stretch occupies residues 96–99 (DTPG). A G4 motif region spans residues 178 to 181 (AKSD). Positions 311 to 331 (RMGSPAPVYPSEPHLHTATAQ) are disordered.

This sequence belongs to the TRAFAC class TrmE-Era-EngA-EngB-Septin-like GTPase superfamily. Septin GTPase family. In terms of assembly, component of the septin complex composed of two copies of each spn1, spn2, spn3 and spn4. Component of the sporulation-specific septin complex composed of at least spn2, spn5, spn6 and spn7.

The protein resides in the cytoplasm. It is found in the cell cortex. The protein localises to the forespore membrane. Functionally, plays a role in the cell cycle. Involved in a late stage of septum formation leading to the separation of the daughter cells. Involved in the correct orientation of forespore membrane extension during sporulation. Binds phosphatidylinositol 4-phosphate. In Schizosaccharomyces pombe (strain 972 / ATCC 24843) (Fission yeast), this protein is Septin homolog spn2 (spn2).